The sequence spans 92 residues: Large ribosomal subunit protein bL27 (92 aa).

A propeptide spanning residues 1 to 9 (MIKANLQLF) is cleaved from the precursor.

Belongs to the bacterial ribosomal protein bL27 family. The N-terminus is cleaved by ribosomal processing cysteine protease Prp.

The chain is Large ribosomal subunit protein bL27 from Acetivibrio thermocellus (strain ATCC 27405 / DSM 1237 / JCM 9322 / NBRC 103400 / NCIMB 10682 / NRRL B-4536 / VPI 7372) (Clostridium thermocellum).